The following is a 396-amino-acid chain: Dihydrolipoyllysine-residue acetyltransferase component of pyruvate dehydrogenase complex (396 aa).

Positions 1 to 69 (MPDIGLEEVE…KTDALIMRCE (69 aa)) constitute a Lipoyl-binding domain. Lys-35 is modified (N6-lipoyllysine). Positions 104 to 141 (HATPLIRRLARNLNINLYDVVGTGPKNRILKEDLDLYQ) constitute a Peripheral subunit-binding (PSBD) domain. His-369 is a catalytic residue.

This sequence belongs to the 2-oxoacid dehydrogenase family. Forms a 24-polypeptide structural core with octahedral symmetry. (R)-lipoate serves as cofactor.

The enzyme catalyses N(6)-[(R)-dihydrolipoyl]-L-lysyl-[protein] + acetyl-CoA = N(6)-[(R)-S(8)-acetyldihydrolipoyl]-L-lysyl-[protein] + CoA. In terms of biological role, the pyruvate dehydrogenase complex catalyzes the overall conversion of pyruvate to acetyl-CoA and CO(2). It contains multiple copies of three enzymatic components: pyruvate dehydrogenase (E1), dihydrolipoamide acetyltransferase (E2) and lipoamide dehydrogenase (E3). In Buchnera aphidicola subsp. Acyrthosiphon pisum (strain APS) (Acyrthosiphon pisum symbiotic bacterium), this protein is Dihydrolipoyllysine-residue acetyltransferase component of pyruvate dehydrogenase complex (aceF).